The primary structure comprises 376 residues: Transmembrane protein 43 homolog (376 aa).

Over 1-10 the chain is Cytoplasmic; it reads MASLSETLRS. Residues 11 to 31 form a helical membrane-spanning segment; that stretch reads HWPIALFGVILFVAGGTELYW. Residues 32 to 277 lie on the Lumenal side of the membrane; the sequence is NEGRAVHNMM…EVFRLEARAQ (246 aa). The helical transmembrane segment at 278–298 threads the bilayer; it reads VLHTWWWRFVGWLLIFFGVTC. Residues 299–323 are Cytoplasmic-facing; it reads NTKILRLLFVRVPLLVALAPDPQFP. Transmembrane regions (helical) follow at residues 324–344 and 345–365; these read VTGN…VAWI and LHRP…YVWF. Over 366–376 the chain is Cytoplasmic; it reads TRNLVDYHRLD.

It belongs to the TMEM43 family.

Its subcellular location is the endoplasmic reticulum membrane. It localises to the nucleus envelope. In terms of biological role, involved in lipid metabolism and utilization. In Drosophila melanogaster (Fruit fly), this protein is Transmembrane protein 43 homolog.